The primary structure comprises 263 residues: Isoprenyl transferase (263 aa).

The active site involves Asp38. A Mg(2+)-binding site is contributed by Asp38. Residues 39 to 42 (GNRR), His55, and 83 to 85 (STD) each bind substrate. Asn86 (proton acceptor) is an active-site residue. Residues Phe87, Arg89, Arg212, and 218–220 (RLS) each bind substrate. Glu231 is a Mg(2+) binding site.

The protein belongs to the UPP synthase family. As to quaternary structure, homodimer. Requires Mg(2+) as cofactor.

Functionally, catalyzes the condensation of isopentenyl diphosphate (IPP) with allylic pyrophosphates generating different type of terpenoids. The chain is Isoprenyl transferase from Thermus thermophilus (strain ATCC BAA-163 / DSM 7039 / HB27).